The primary structure comprises 259 residues: Large ribosomal subunit protein uL2m (259 aa).

The interval 234–259 is disordered; that stretch reads VAMNPVDHPNGGRTKTPKPERSPGVE. Residues 250 to 259 show a composition bias toward basic and acidic residues; the sequence is PKPERSPGVE.

The protein belongs to the universal ribosomal protein uL2 family.

The protein localises to the mitochondrion. This is Large ribosomal subunit protein uL2m (RPL2) from Paramecium tetraurelia.